Here is a 376-residue protein sequence, read N- to C-terminus: Putative peptide import ATP-binding protein BMEII0205 (376 aa).

The interval 1-25 (MPLRPALHLRTGKLRQTPTHNEPDG) is disordered. The ABC transporter domain occupies 64 to 314 (VRTDDLVRDF…PLHPYSRALL (251 aa)). An ATP-binding site is contributed by 106–113 (GESGSGKS).

It belongs to the ABC transporter superfamily. As to quaternary structure, the complex is composed of two ATP-binding proteins (BMEII0205 and BMEII0206), two transmembrane proteins (BMEII0207/BMEII0208 and BMEII0209) and a solute-binding protein (BMEII0210).

The protein localises to the cell inner membrane. Probably part of an ABC transporter complex that could be involved in peptide import. Probably responsible for energy coupling to the transport system. This chain is Putative peptide import ATP-binding protein BMEII0205, found in Brucella melitensis biotype 1 (strain ATCC 23456 / CCUG 17765 / NCTC 10094 / 16M).